The sequence spans 353 residues: MSLLTQTINHIGPLDDQAATAARRRQDMLTKPAGSLGRLEELSIRIAGITGRERPRLTKPAVIVMAADHGVARQGVSAFPAEVTPQMVLNFLRGGAAINVLARHVGAQVIVVDIGVAADLPSHPELVSRKLAYGTADFSQEPAMSRDLAQQAIEVGITCANEAIDSGVDLLATGEMGIANTTAASAVVAAITGRPVAEVTGRGTGIDDASLARKIAVIERALVLHQPNPRDGLDVLAKVGGLEIGGLAGVILGAAARRVPVVIDGFISGAAALIAATLAPAAVNYMIAGHRSVERGHAAVFDRLDLKPLLDLDMRLGEGTGAVLAMSLCQAACKVLDEMATFAEAGVSEKKEA.

Glutamate 318 serves as the catalytic Proton acceptor.

Belongs to the CobT family.

The enzyme catalyses 5,6-dimethylbenzimidazole + nicotinate beta-D-ribonucleotide = alpha-ribazole 5'-phosphate + nicotinate + H(+). It functions in the pathway nucleoside biosynthesis; alpha-ribazole biosynthesis; alpha-ribazole from 5,6-dimethylbenzimidazole: step 1/2. Functionally, catalyzes the synthesis of alpha-ribazole-5'-phosphate from nicotinate mononucleotide (NAMN) and 5,6-dimethylbenzimidazole (DMB). This is Nicotinate-nucleotide--dimethylbenzimidazole phosphoribosyltransferase from Chloroflexus aggregans (strain MD-66 / DSM 9485).